Here is a 535-residue protein sequence, read N- to C-terminus: MNKKKLSIRWKITILSYILVIFSFLIGGIVLIGNIQHTEERELKKRLMNTARTVSEMTEVKEALARKKQTEAVRHAVEEIRMINEADYIVVMDMNHIRYTHPVSTSIGKKSEGADEEAAFAEHIYFSEAKGEIGTAVRAFYPVKDQDLNQIGVVLVGKTLPGIADILLHLKRDIAFIVVLTLGFGLAGSFLLARHIKKQMFQLEPHEIVRMYEERTATFHSMNEGVIAIDNRLVITIFNEKAKQIFEVQGDLIGKVIWEVLKDSRLPEIVERNKAVYNEEIRVSGKVIMSSRIPIVMKKKVIGAVAIFQDRTEAAKMAEELTGVRNFVEALRVQNHEHMNKLHTIAGLIQLGKSEKALQLAFQASTEQENVTEFLHRSIQNDAAAGLLLSKIRRGRELGIAVHIDENSSLQQFPEHVDQHDIVVLLGNLIENAFGSFETVQSEDKRIDISIEQTDDILAILIEDNGCGIEPTHMPRLYDKGFTVNKTGGTGYGLYLVKQIIDKGSGTIEVDSHAGQGTSFSIVFPMKGEEAQHGS.

Topologically, residues 1-11 (MNKKKLSIRWK) are cytoplasmic. Residues 12–32 (ITILSYILVIFSFLIGGIVLI) traverse the membrane as a helical segment. Residues 33-172 (GNIQHTEERE…IADILLHLKR (140 aa)) lie on the Extracellular side of the membrane. Residues 173-193 (DIAFIVVLTLGFGLAGSFLLA) form a helical membrane-spanning segment. Residues 194–535 (RHIKKQMFQL…MKGEEAQHGS (342 aa)) lie on the Cytoplasmic side of the membrane. The PAS domain occupies 213-276 (EERTATFHSM…PEIVERNKAV (64 aa)). Positions 333-528 (VQNHEHMNKL…SFSIVFPMKG (196 aa)) constitute a Histidine kinase domain. Position 336 is a phosphohistidine; by autocatalysis (histidine 336).

The protein resides in the cell membrane. The catalysed reaction is ATP + protein L-histidine = ADP + protein N-phospho-L-histidine.. Its function is as follows. Member of the two-component regulatory system DctS/DctR. Probably activates DctR by phosphorylation. Essential for expression of dctP. The protein is Probable C4-dicarboxylate sensor kinase (dctS) of Bacillus subtilis (strain 168).